The primary structure comprises 188 residues: MSVTRLSFPYGESIQWHSPDQIPQLPPSPFREWLLASGSLTQKLKSHCNQFEVKVLGEAMLPPFPGELPHQGQAWIREVLLCLDGIPWVFARTLVPGAMMDSAQDNFLSLGTRPLGELLFTSGDFTPGKIEVGEFTACDSLAKLIDSLEQESHHPLWGRRRYFSHGDQQLIVSEIFLPKARQLIDRLA.

Substrate contacts are provided by arginine 77, leucine 115, and glutamate 174.

Belongs to the UbiC family.

The protein resides in the cytoplasm. The enzyme catalyses chorismate = 4-hydroxybenzoate + pyruvate. It participates in cofactor biosynthesis; ubiquinone biosynthesis. Its function is as follows. Removes the pyruvyl group from chorismate, with concomitant aromatization of the ring, to provide 4-hydroxybenzoate (4HB) for the ubiquinone pathway. The polypeptide is Probable chorismate pyruvate-lyase (Shewanella loihica (strain ATCC BAA-1088 / PV-4)).